The following is a 400-amino-acid chain: Selection and upkeep of intraepithelial T-cells protein 2 (400 aa).

An N-terminal signal peptide occupies residues 1 to 21 (MGATGVLLCVVLHFLQMVTQS). Over 22–240 (SEKFTVTGLQ…LSGELFSWKR (219 aa)) the chain is Extracellular. The region spanning 23–133 (EKFTVTGLQR…VGEFYEEHIT (111 aa)) is the Ig-like V-type domain. Cystine bridges form between Cys46-Cys120 and Cys160-Cys214. The region spanning 139–225 (ATSSVMYILM…LQNLLTHQEE (87 aa)) is the Ig-like C1-type domain. An N-linked (GlcNAc...) asparagine glycan is attached at Asn197. A helical membrane pass occupies residues 241–261 (VWIMILTTIGFMMIAFCMTYC). The Cytoplasmic portion of the chain corresponds to 262–280 (VQQHLLYGTFSKGKCHWLK). The helical transmembrane segment at 281 to 301 (STMIFMFSVIAVTGVMLILHL) threads the bilayer. Over 302–321 (KQRVPVSDQHFELDTLWLED) the chain is Extracellular. A helical membrane pass occupies residues 322 to 342 (ISVILCVLIVFIIKLISFIYF). The Cytoplasmic segment spans residues 343-400 (RLEGDHQGWSLPPYLSATPTAAICRLAVPEYSRGHLQLDSEDDLAGMGPSPFFITPCF).

It belongs to the SKINT family. In terms of tissue distribution, expressed in skin, thymus and mammary gland.

It localises to the membrane. In terms of biological role, may act by engaging a cell surface molecule on immature T-cells in the embryonic thymus. This is Selection and upkeep of intraepithelial T-cells protein 2 (Skint2) from Mus musculus (Mouse).